The following is an 889-amino-acid chain: Potassium/sodium hyperpolarization-activated cyclic nucleotide-gated channel 2 (889 aa).

Residues 1–10 (MDARGGGGRP) show a composition bias toward gly residues. Positions 1–159 (MDARGGGGRP…GPAGEPRGSQ (159 aa)) are disordered. Over 1–215 (MDARGGGGRP…PYSDFRFYWD (215 aa)) the chain is Cytoplasmic. Positions 17 to 55 (TPAPGPPPPPPPAPPQQQPPPPPPPAPPPGPGPAPPQHP) are enriched in pro residues. Residues 129-155 (GAASGPAPGPGPAEEAGSEEAGPAGEP) show a composition bias toward low complexity. A phosphoserine mark is found at serine 146 and serine 161. The segment at 158–209 (SQASFMQRQFGALLQPGVNKFSLRMFGSQKAVEREQERVKSAGAWIIHPYSD) is involved in subunit assembly. The helical transmembrane segment at 216–236 (FTMLLFMVGNLIIIPVGITFF) threads the bilayer. Over 237-240 (KDET) the chain is Extracellular. The helical transmembrane segment at 241 to 261 (TAPWIVFNVVSDTFFLMDLVL) threads the bilayer. The Cytoplasmic segment spans residues 262–288 (NFRTGIVIEDNTEIILDPEKIKKKYLR). Residues 289 to 309 (TWFVVDFVSSIPVDYIFLIVE) form a helical membrane-spanning segment. Residues 310 to 317 (KGIDSEVY) are Extracellular-facing. The helical; Voltage-sensor transmembrane segment at 318–338 (KTARALRIVRFTKILSLLRLL) threads the bilayer. Over 339–369 (RLSRLIRYIHQWEEIFHMTYDLASAVMRICN) the chain is Cytoplasmic. Residues 370-390 (LISMMLLLCHWDGCLQFLVPM) form a helical membrane-spanning segment. The Extracellular segment spans residues 391–413 (LQDFPRNCWVSINGMVNHSWSEL). Residue asparagine 407 is glycosylated (N-linked (GlcNAc...) asparagine). An intramembrane region (pore-forming) is located at residues 414 to 435 (YSFALFKAMSHMLCIGYGRQAP). Topologically, residues 436-440 (ESMTD) are extracellular. The chain crosses the membrane as a helical span at residues 441–461 (IWLTMLSMIVGATCYAMFIGH). Over 462 to 889 (ATALIQSLDS…SARSRLSSNL (428 aa)) the chain is Cytoplasmic. Methionine 599, glycine 608, glutamate 609, isoleucine 610, cysteine 611, arginine 618, threonine 619, and arginine 659 together coordinate 3',5'-cyclic AMP. At serine 668 the chain carries Phosphoserine; by PKG/PRKG2. At serine 754 the chain carries Phosphoserine. Positions 754 to 889 (SPRLVRRPPP…SARSRLSSNL (136 aa)) are disordered. Arginine 756 bears the Omega-N-methylarginine mark. The span at 760–784 (RPPPGPAPAAASPGPPPPASPPGAP) shows a compositional bias: pro residues. 5 positions are modified to phosphoserine: serine 771, serine 779, serine 786, serine 866, and serine 868. The segment covering 785 to 860 (ASPRAPRTSP…TPAARAAAPS (76 aa)) has biased composition (low complexity).

It belongs to the potassium channel HCN family. In terms of assembly, homotetramer. The channel is composed of a homo- or heterotetrameric complex of pore-forming subunits. Heterotetramer with HCN1. Forms an obligate 4:4 complex with accessory subunit PEX5L. Interacts with KCNE2. Post-translationally, phosphorylation at Ser-668 by PRKG2 shifts the voltage-dependence to more negative voltages, hence counteracting the stimulatory effect of cGMP on gating. S-palmitoylated. In terms of processing, N-glycosylated; required for cell surface trafficking of HCN2. As to expression, highly expressed throughout the brain. Detected at low levels in heart.

The protein localises to the cell membrane. The enzyme catalyses Na(+)(in) = Na(+)(out). It catalyses the reaction K(+)(in) = K(+)(out). It carries out the reaction NH4(+)(in) = NH4(+)(out). With respect to regulation, activated by cAMP, and at 10-100 times higher concentrations, also by cGMP. cAMP binding causes a conformation change that leads to the assembly of an active tetramer and channel opening. Binding of cAMP removes a tonic inhibition conferred by cyclic nucleotide-binding domain (CNBD) on channel opening. Channel activity is modulated by intracellular chloride ions and pH; acidic pH shifts the activation to more negative voltages. Inhibited by extracellular cesium ions. In terms of biological role, hyperpolarization-activated ion channel that is permeable to sodium and potassium ions. Displays lower selectivity for K(+) over Na(+) ions. Contributes to the native pacemaker currents in heart (If) and in neurons (Ih). Can also transport ammonium in the distal nephron. Involved in the initiation of neuropathic pain in sensory neurons. This is Potassium/sodium hyperpolarization-activated cyclic nucleotide-gated channel 2 from Homo sapiens (Human).